The sequence spans 188 residues: MVSSKDKIKEELKQEEPEENVEIANTETQKIEMVEEAKSDEFVLPFQRENLKNYLWRLLIIKKVEIRDVILKNSNEPAQVSYIDGYVIDNNELEQRLIKEIVNNQTIPINLLKEVNNHKKEVYLFSTSQGVYYSLLRSVVPKLKNGAVIVGIALQQSDYPQPMVTLVHPSRLEELKTQYEALSKTKKG.

A compositionally biased stretch (basic and acidic residues) spans 1–15 (MVSSKDKIKEELKQE). Residues 1-21 (MVSSKDKIKEELKQEEPEENV) form a disordered region.

This is an uncharacterized protein from Saccharolobus islandicus (Sulfolobus islandicus).